The following is a 131-amino-acid chain: Large ribosomal subunit protein bL17 (131 aa).

Belongs to the bacterial ribosomal protein bL17 family. As to quaternary structure, part of the 50S ribosomal subunit. Contacts protein L32.

The sequence is that of Large ribosomal subunit protein bL17 from Vesicomyosocius okutanii subsp. Calyptogena okutanii (strain HA).